A 644-amino-acid chain; its full sequence is Chaperone protein HtpG (644 aa).

The tract at residues 1-352 is a; substrate-binding; it reads MNARVEQLEF…AQDMSLNVSR (352 aa). The tract at residues 353 to 566 is b; that stretch reads EILQQDRQIK…AFGITPALAR (214 aa). A c region spans residues 567 to 644; sequence LYRASGQDIP…ILADRLARTL (78 aa).

This sequence belongs to the heat shock protein 90 family. Homodimer.

It is found in the cytoplasm. Functionally, molecular chaperone. Has ATPase activity. The sequence is that of Chaperone protein HtpG from Mycolicibacterium paratuberculosis (strain ATCC BAA-968 / K-10) (Mycobacterium paratuberculosis).